The primary structure comprises 202 residues: Probable pathogenesis-related protein CaO19.2336 (202 aa).

A signal peptide spans 1–20 (MKTLLFIYLQLLLLLSIIIG). N-linked (GlcNAc...) asparagine glycosylation is found at Asn-58 and Asn-152. In terms of domain architecture, SCP spans 66–179 (LKEHNNKRKL…LNALYIVCSY (114 aa)).

The protein belongs to the CRISP family.

The protein resides in the secreted. In terms of biological role, secreted protein that acts as a virulence factor during infections. The chain is Probable pathogenesis-related protein CaO19.2336 from Candida albicans (strain SC5314 / ATCC MYA-2876) (Yeast).